A 743-amino-acid polypeptide reads, in one-letter code: Adhesion defective protein 2 (743 aa).

A disordered region spans residues 1–36 (MADPGLRSGVGLPSQQGQKHDLQKDQKQPHVNNADR). Basic and acidic residues predominate over residues 18–28 (QKHDLQKDQKQ). The LisH domain occupies 38 to 70 (TQSLLNSYIYDYLIKKDYCEAARAFGREAQVQT). Disordered regions lie at residues 79–127 (NSLA…PPPP), 264–361 (LQSV…QYPV), 379–426 (RNPH…YGFS), and 476–692 (KERK…KSSD). Serine 89 carries the post-translational modification Phosphoserine. Over residues 98-114 (ISNNESSDENMNVNNGN) the composition is skewed to polar residues. Residues 264–281 (LQSVQQQQKQHQQKKTPQ) are compositionally biased toward low complexity. 5 stretches are compositionally biased toward polar residues: residues 282–297 (SGST…QPTT), 315–353 (IPSS…DTTG), 390–399 (PSSTLPQQQK), 408–426 (QQPS…YGFS), and 482–500 (TSAS…SSVA). Positions 501-520 (KTKSTTPKSTDTPTEATTSP) are enriched in low complexity. 2 stretches are compositionally biased toward polar residues: residues 521–544 (VKVS…NMPM) and 556–566 (DHPSNYSNLIE). Over residues 567–578 (NSSTSDTNNADN) the composition is skewed to low complexity. Over residues 586–602 (WQLQQTHSSRPTPNASS) the composition is skewed to polar residues. Residues 612-631 (PSSANSNAPTPAPTVNTTNP) show a composition bias toward low complexity. Residues 661 to 670 (DNQNQSGKSN) are compositionally biased toward polar residues. The segment covering 671–688 (PDTSATPSAPTESTTVAT) has biased composition (low complexity).

It belongs to the FLO8 family.

It is found in the cytoplasm. The protein localises to the nucleus. Functionally, probable transcriptional regulator involved in cell adhesion. This chain is Adhesion defective protein 2 (adn2), found in Schizosaccharomyces pombe (strain 972 / ATCC 24843) (Fission yeast).